Reading from the N-terminus, the 293-residue chain is Ribosomal protein L11 methyltransferase (293 aa).

S-adenosyl-L-methionine-binding residues include threonine 145, glycine 166, aspartate 188, and asparagine 230.

It belongs to the methyltransferase superfamily. PrmA family.

It localises to the cytoplasm. It catalyses the reaction L-lysyl-[protein] + 3 S-adenosyl-L-methionine = N(6),N(6),N(6)-trimethyl-L-lysyl-[protein] + 3 S-adenosyl-L-homocysteine + 3 H(+). In terms of biological role, methylates ribosomal protein L11. This chain is Ribosomal protein L11 methyltransferase, found in Shewanella pealeana (strain ATCC 700345 / ANG-SQ1).